Consider the following 377-residue polypeptide: Metallo-hydrolase mfmC (377 aa).

Zn(2+)-binding residues include His126, His128, Asp130, His131, His209, and Asp233.

Belongs to the metallo-beta-lactamase superfamily.

Its pathway is secondary metabolite biosynthesis; terpenoid biosynthesis. Its function is as follows. Metallo-hydrolase; part of the gene cluster that mediates the biosynthesis of the phthalide-terpenoid hybrid 11'-O-desmethylfendlerol. Within the pathway, mfma and mfmC act together to convert 3,5-dimethylorsellinic acid (DMOA) into the phthalide 5,7-dihydroxy-4-(hydroxymethyl)-6-methylphthalide. The biosynthesis of 11'-O-desmethylfendlerol begins with the NR-PKS mfmB that forms 3,5-dimethylorsellinic acid (DMOA), which is then transformed into the phthalide 5,7-dihydroxy-4-(hydroxymethyl)-6-methylphthalide by the cytochrome P450 monooxygenase mfmA and the hydrolase mfmC. Subsequently, the methyltransferase mfmE catalyzes 7-O-methylation to yield 5-hydroxy-4-(hydroxymethyl)-7-methoxy-6-methylphthalide, which undergoes C-3 hydroxylation by the cytochrome P450 monooxygenase mfmF. The resultant cyclopolic acid (2,5-dihydroxy-4-(hydroxymethyl)-7-methoxy-6-methylphthalide) is then farnesylated by the DMATS-type prenyltransferase mfmD to afford 5-O-farnesylcyclopolic acid. Finally, the Pyr4-family terpene cyclase mfmH cyclizes the farnesyl moiety of 5-O-farnesylcyclopolic acid into a drimane-like structure, thus completing the biosynthesis of 11'-O-desmethylfendlerol. This chain is Metallo-hydrolase mfmC, found in Annulohypoxylon moriforme (Filamentous fungus).